The chain runs to 325 residues: Chain length determinant protein (325 aa).

At 1 to 31 (MRVENNNVSGQNHDPEQIDLIDLLVQLWRGK) the chain is on the cytoplasmic side. A helical transmembrane segment spans residues 32–52 (MTIIISVIVAIALAIGYLAVA). Residues 53–294 (KEKWTSTAII…LPIRRDSPKK (242 aa)) are Periplasmic-facing. The helical transmembrane segment at 295–315 (AITLILAVLLGGMVGAGIVLG) threads the bilayer. At 316–325 (RNALRNYNAK) the chain is on the cytoplasmic side.

This sequence belongs to the WzzB/Cld/Rol family.

It is found in the cell inner membrane. It participates in bacterial outer membrane biogenesis; lipopolysaccharide biosynthesis. Functionally, confers a modal distribution of chain length on the O-antigen component of lipopolysaccharide (LPS). Gives rise to a reduced number of short chain molecules and increases in numbers of longer molecules, with a modal value of 13 (in strain O111/M92) and of 17 (in strain K12). In Escherichia coli, this protein is Chain length determinant protein (wzzB).